A 352-amino-acid chain; its full sequence is Ion-translocating oxidoreductase complex subunit D (352 aa).

Transmembrane regions (helical) follow at residues 20-40, 42-62, 78-109, 123-143, and 148-168; these read IMLL…WFFG, GTLV…ALVL, ALLT…VIIA, PAMI…TSWL, and IAVN…GHTA. At Thr187 the chain carries FMN phosphoryl threonine. A run of 5 helical transmembrane segments spans residues 214–234, 242–262, 267–287, 301–321, and 322–342; these read ILAG…GVWL, WHIP…GWLF, LAAP…FFIL, LIFG…GGYP, and DGVA…DYYT.

Belongs to the NqrB/RnfD family. In terms of assembly, the complex is composed of six subunits: RsxA, RsxB, RsxC, RsxD, RsxE and RsxG. Requires FMN as cofactor.

The protein resides in the cell inner membrane. Functionally, part of a membrane-bound complex that couples electron transfer with translocation of ions across the membrane. Required to maintain the reduced state of SoxR. This is Ion-translocating oxidoreductase complex subunit D from Escherichia coli O157:H7.